The primary structure comprises 1004 residues: Sal-like protein 2 (1004 aa).

Disordered regions lie at residues methionine 1–proline 33, alanine 51–serine 122, glycine 137–leucine 177, proline 220–lysine 270, and proline 285–glycine 307. Residues glutamine 34–cysteine 56 form a C2H2-type 1; atypical zinc finger. The segment covering asparagine 71–proline 81 has biased composition (low complexity). The segment covering proline 83–asparagine 98 has biased composition (basic and acidic residues). Positions proline 99–proline 110 are enriched in low complexity. The segment covering proline 151 to glycine 171 has biased composition (pro residues). At serine 243 the chain carries Phosphoserine. 5 C2H2-type zinc fingers span residues histidine 372 to histidine 394, tyrosine 400 to histidine 422, asparagine 629 to histidine 651, phenylalanine 657 to histidine 679, and asparagine 689 to histidine 711. Residues leucine 712–cysteine 910 form a disordered region. Polar residues predominate over residues glutamine 731–glycine 742. The segment covering proline 756–serine 779 has biased composition (acidic residues). Phosphoserine occurs at positions 794, 799, and 803. The span at glutamate 800–valine 809 shows a compositional bias: acidic residues. Over residues alanine 810–valine 819 the composition is skewed to low complexity. Residues lysine 820–proline 829 are compositionally biased toward basic and acidic residues. The segment covering threonine 832–aspartate 841 has biased composition (pro residues). The segment covering alanine 896–cysteine 910 has biased composition (basic and acidic residues). Lysine 908 participates in a covalent cross-link: Glycyl lysine isopeptide (Lys-Gly) (interchain with G-Cter in ubiquitin). 2 consecutive C2H2-type zinc fingers follow at residues lysine 908 to histidine 930 and phenylalanine 937 to histidine 961.

Belongs to the sal C2H2-type zinc-finger protein family. Expressed throughout embryonic development. In adult predominantly in brain.

The protein localises to the nucleus. Probable transcription factor that plays a role in eye development before, during, and after optic fissure closure. The sequence is that of Sal-like protein 2 (Sall2) from Mus musculus (Mouse).